Consider the following 415-residue polypeptide: Serine hydroxymethyltransferase (415 aa).

(6S)-5,6,7,8-tetrahydrofolate is bound by residues L121 and 125–127 (GHL). K230 carries the N6-(pyridoxal phosphate)lysine modification. (6S)-5,6,7,8-tetrahydrofolate contacts are provided by residues E246 and 354 to 356 (SPF).

The protein belongs to the SHMT family. Homodimer. Pyridoxal 5'-phosphate is required as a cofactor.

It is found in the cytoplasm. The enzyme catalyses (6R)-5,10-methylene-5,6,7,8-tetrahydrofolate + glycine + H2O = (6S)-5,6,7,8-tetrahydrofolate + L-serine. It participates in one-carbon metabolism; tetrahydrofolate interconversion. The protein operates within amino-acid biosynthesis; glycine biosynthesis; glycine from L-serine: step 1/1. Its function is as follows. Catalyzes the reversible interconversion of serine and glycine with tetrahydrofolate (THF) serving as the one-carbon carrier. This reaction serves as the major source of one-carbon groups required for the biosynthesis of purines, thymidylate, methionine, and other important biomolecules. Also exhibits THF-independent aldolase activity toward beta-hydroxyamino acids, producing glycine and aldehydes, via a retro-aldol mechanism. The sequence is that of Serine hydroxymethyltransferase from Bdellovibrio bacteriovorus (strain ATCC 15356 / DSM 50701 / NCIMB 9529 / HD100).